The following is a 478-amino-acid chain: Putative malate transporter YflS (478 aa).

The next 12 helical transmembrane spans lie at 12-31 (AVKL…IWFI), 41-57 (AWHL…GFIS), 64-81 (AIAI…TLSI), 96-118 (IVIA…ISYV), 187-209 (GFQG…PLIA), 222-244 (WTSW…PLVI), 277-296 (LSMV…GGSF), 300-319 (ATTT…VLTW), 332-354 (LTWF…VSWF), 364-386 (GFSW…YFFA), 398-420 (AFLA…LAFI), and 450-472 (WSIG…GLWW).

It belongs to the SLC13A/DASS transporter (TC 2.A.47) family. DIT1 subfamily.

Its subcellular location is the cell membrane. Its function is as follows. Might be a malate transporter. This is Putative malate transporter YflS (yflS) from Bacillus subtilis (strain 168).